A 342-amino-acid polypeptide reads, in one-letter code: Tetraacyldisaccharide 4'-kinase (342 aa).

Residue 68–75 coordinates ATP; sequence TVGGTGKT.

It belongs to the LpxK family.

The enzyme catalyses a lipid A disaccharide + ATP = a lipid IVA + ADP + H(+). It functions in the pathway glycolipid biosynthesis; lipid IV(A) biosynthesis; lipid IV(A) from (3R)-3-hydroxytetradecanoyl-[acyl-carrier-protein] and UDP-N-acetyl-alpha-D-glucosamine: step 6/6. Transfers the gamma-phosphate of ATP to the 4'-position of a tetraacyldisaccharide 1-phosphate intermediate (termed DS-1-P) to form tetraacyldisaccharide 1,4'-bis-phosphate (lipid IVA). The polypeptide is Tetraacyldisaccharide 4'-kinase (Burkholderia cenocepacia (strain HI2424)).